Consider the following 170-residue polypeptide: ATP synthase subunit b (170 aa).

The chain crosses the membrane as a helical span at residues 3-23 (IKILFFLALPFLAYASEHGGT).

Belongs to the ATPase B chain family. In terms of assembly, F-type ATPases have 2 components, F(1) - the catalytic core - and F(0) - the membrane proton channel. F(1) has five subunits: alpha(3), beta(3), gamma(1), delta(1), epsilon(1). F(0) has three main subunits: a(1), b(2) and c(10-14). The alpha and beta chains form an alternating ring which encloses part of the gamma chain. F(1) is attached to F(0) by a central stalk formed by the gamma and epsilon chains, while a peripheral stalk is formed by the delta and b chains.

It is found in the cell inner membrane. In terms of biological role, f(1)F(0) ATP synthase produces ATP from ADP in the presence of a proton or sodium gradient. F-type ATPases consist of two structural domains, F(1) containing the extramembraneous catalytic core and F(0) containing the membrane proton channel, linked together by a central stalk and a peripheral stalk. During catalysis, ATP synthesis in the catalytic domain of F(1) is coupled via a rotary mechanism of the central stalk subunits to proton translocation. Its function is as follows. Component of the F(0) channel, it forms part of the peripheral stalk, linking F(1) to F(0). The polypeptide is ATP synthase subunit b (Campylobacter concisus (strain 13826)).